We begin with the raw amino-acid sequence, 613 residues long: Lysophospholipase 1 (613 aa).

A signal peptide spans 1-21 (MLFRGLSLWMLFLASCLSALA). Residues 55-593 (DCPSDNIVES…YNYCWSGLYD (539 aa)) form the PLA2c domain. Residues asparagine 142, asparagine 173, asparagine 220, asparagine 244, asparagine 281, asparagine 319, asparagine 348, asparagine 365, asparagine 494, asparagine 499, asparagine 523, asparagine 551, and asparagine 572 are each glycosylated (N-linked (GlcNAc...) asparagine).

The protein belongs to the lysophospholipase family.

It localises to the secreted. The catalysed reaction is a 1-acyl-sn-glycero-3-phosphocholine + H2O = sn-glycerol 3-phosphocholine + a fatty acid + H(+). Functionally, catalyzes the release of fatty acids from lysophospholipids. Required for survival under high osmolarity, for normal osmotic stress-induced gene expression, and for nutrient-mediated repression of sexual differentiation. This Schizosaccharomyces pombe (strain 972 / ATCC 24843) (Fission yeast) protein is Lysophospholipase 1 (plb1).